The chain runs to 348 residues: Chaperone protein DnaJ (348 aa).

The J domain maps to aspartate 3–valine 65. The CR-type zinc-finger motif lies at glycine 109 to proline 191. Residues cysteine 122, cysteine 125, cysteine 139, cysteine 142, cysteine 165, cysteine 168, cysteine 179, and cysteine 182 each contribute to the Zn(2+) site. CXXCXGXG motif repeat units follow at residues cysteine 122 to arginine 129, cysteine 139 to glycine 146, cysteine 165 to glycine 172, and cysteine 179 to glycine 186.

Belongs to the DnaJ family. Homodimer. The cofactor is Zn(2+).

The protein localises to the cytoplasm. Participates actively in the response to hyperosmotic and heat shock by preventing the aggregation of stress-denatured proteins and by disaggregating proteins, also in an autonomous, DnaK-independent fashion. Unfolded proteins bind initially to DnaJ; upon interaction with the DnaJ-bound protein, DnaK hydrolyzes its bound ATP, resulting in the formation of a stable complex. GrpE releases ADP from DnaK; ATP binding to DnaK triggers the release of the substrate protein, thus completing the reaction cycle. Several rounds of ATP-dependent interactions between DnaJ, DnaK and GrpE are required for fully efficient folding. Also involved, together with DnaK and GrpE, in the DNA replication of plasmids through activation of initiation proteins. The sequence is that of Chaperone protein DnaJ from Tropheryma whipplei (strain TW08/27) (Whipple's bacillus).